Here is a 208-residue protein sequence, read N- to C-terminus: Protein-L-isoaspartate O-methyltransferase (208 aa).

Residue Ser-59 is part of the active site.

This sequence belongs to the methyltransferase superfamily. L-isoaspartyl/D-aspartyl protein methyltransferase family.

The protein resides in the cytoplasm. It carries out the reaction [protein]-L-isoaspartate + S-adenosyl-L-methionine = [protein]-L-isoaspartate alpha-methyl ester + S-adenosyl-L-homocysteine. Catalyzes the methyl esterification of L-isoaspartyl residues in peptides and proteins that result from spontaneous decomposition of normal L-aspartyl and L-asparaginyl residues. It plays a role in the repair and/or degradation of damaged proteins. The chain is Protein-L-isoaspartate O-methyltransferase from Photorhabdus laumondii subsp. laumondii (strain DSM 15139 / CIP 105565 / TT01) (Photorhabdus luminescens subsp. laumondii).